Reading from the N-terminus, the 424-residue chain is ATP-sensitive inward rectifier potassium channel 8 (424 aa).

Residues 1–69 are Cytoplasmic-facing; sequence MLARKSIIPE…IFTTLVDLKW (69 aa). At Ser6 the chain carries Phosphoserine. A helical membrane pass occupies residues 70 to 94; the sequence is RHTLVIFTMSFLCSWLLFAIMWWLV. The Extracellular portion of the chain corresponds to 95–126; the sequence is AFAHGDIYAYMEKGITEKSGLESAVCVTNVRS. Residues 127–138 constitute an intramembrane region (helical; Pore-forming); sequence FTSAFLFSIEVQ. An intramembrane region (pore-forming) is located at residues 139–145; sequence VTIGFGG. The Selectivity filter signature appears at 140 to 145; it reads TIGFGG. The Extracellular segment spans residues 146–154; it reads RMMTEECPL. Residues 155–176 form a helical membrane-spanning segment; sequence AITVLILQNIVGLIINAVMLGC. At 177–424 the chain is on the cytoplasmic side; sequence IFMKTAQAHR…PEGNQCPSES (248 aa). Residues 374 to 424 are disordered; that stretch reads LSHQNSLRKRNSMRRNNSMRRSNSIRRNNSSLMVPKVQFMTPEGNQCPSES. Low complexity predominate over residues 387 to 404; that stretch reads RRNNSMRRSNSIRRNNSS.

It belongs to the inward rectifier-type potassium channel (TC 1.A.2.1) family. KCNJ8 subfamily. Interacts with ABCC9. As to expression, widely expressed, including in pancreatic islets, pituitary, skeletal muscle and heart.

It localises to the membrane. The catalysed reaction is K(+)(in) = K(+)(out). In terms of biological role, inward rectifier potassium channels are characterized by a greater tendency to allow potassium to flow into the cell rather than out of it. Their voltage dependence is regulated by the concentration of extracellular potassium; as external potassium is raised, the voltage range of the channel opening shifts to more positive voltages. The inward rectification is mainly due to the blockage of outward current by internal magnesium. This channel is activated by internal ATP and can be blocked by external barium. Can form a sulfonyllurea-sensitive but ATP-insensitive potassium channel with ABCC9. The polypeptide is ATP-sensitive inward rectifier potassium channel 8 (Kcnj8) (Rattus norvegicus (Rat)).